Here is an 89-residue protein sequence, read N- to C-terminus: Putative RING finger protein 121R (89 aa).

The RING-type zinc-finger motif lies at 45 to 78; sequence CPICLIAKVNTVLECTHVLCSNCVKKINVCPICR.

This is Putative RING finger protein 121R from Invertebrate iridescent virus 6 (IIV-6).